Reading from the N-terminus, the 731-residue chain is MSTEPNCPFSGNARKHTAAGAPSNADWWPNQLKLNILHQHSAMSDPMGEAFNYAQEFKSLDLEAVKKDLLALMTNSQDWWPADFGHYGPLFIRMAWHSAGTYRVSDGRGGAGSGNQRFAPLNSWPDNVNLDKARRLLWPVKQKYGRKLSWADLMILAGNVALESMGFKTFGFAGGREDIWEPEEDVYWGSENTWLDDKRYSGDRDLENPLGAVQMGLIYVNPEGPNGNPDPIAAARDIRETFARMAMNDEETVALIAGGHTFGKTHGAGDVKHVGPEPEAAGIEEQGLGWNSGFGTGKGGDTISSGLEVTWSTTPTKWGNNYFDNLFGYEWELTTSPAGAQQWKPKGDAGAGTVPDAHDPSKRHAPAMLTTDLSLRLDPAYEKISRRFHENPDQLADAFARAWFKLTHRDMGPLSRYLGPLVPKEQLLWQDPIPAVDHKLVDEQDIAALKTRILASGLSISQLVTTAWASAATFRGSDKRGGANGARIRLAPQKNWEVNQPAELAKVLQKLETIQKDFNSAQSGGKKVSLADLIVLGGCAAVEAAAKKAGQDVKVPFSPGRMDASQEQTDVDSFAVLEPAADGFRNYARKGLEGSAAELLVDKAQLMTLTAPEMTVLIGGLRALNANVGQSKHGVFTKQPETLTNDFFVNLLDMSTKWQKSATSEGVLEGRDRATGELKWTGTIVDLVFGSNSQLRALAEVYACSDSQKSFVRDFVAAWNKVMNLDRFDLA.

Positions 1-24 (MSTEPNCPFSGNARKHTAAGAPSN) are disordered. Positions 96-219 (WHSAGTYRVS…LGAVQMGLIY (124 aa)) form a cross-link, tryptophyl-tyrosyl-methioninium (Trp-Tyr) (with M-245). The active-site Proton acceptor is the histidine 97. Positions 219 to 245 (YVNPEGPNGNPDPIAAARDIRETFARM) form a cross-link, tryptophyl-tyrosyl-methioninium (Tyr-Met) (with W-96). Histidine 260 lines the heme b pocket. Residues 339-365 (GAQQWKPKGDAGAGTVPDAHDPSKRHA) are disordered.

The protein belongs to the peroxidase family. Peroxidase/catalase subfamily. As to quaternary structure, homodimer or homotetramer. It depends on heme b as a cofactor. Formation of the three residue Trp-Tyr-Met cross-link is important for the catalase, but not the peroxidase activity of the enzyme.

The enzyme catalyses H2O2 + AH2 = A + 2 H2O. It carries out the reaction 2 H2O2 = O2 + 2 H2O. Bifunctional enzyme with both catalase and broad-spectrum peroxidase activity. The chain is Catalase-peroxidase from Polaromonas sp. (strain JS666 / ATCC BAA-500).